The chain runs to 203 residues: NAD(P)H dehydrogenase (quinone) (203 aa).

Residues 7–194 form the Flavodoxin-like domain; the sequence is VLVLYHSSYG…SLARKQGAHV (188 aa). FMN-binding positions include 13–18 and 82–84; these read SSYGHI and TRF. Residue tyrosine 15 participates in NAD(+) binding. Substrate is bound at residue tryptophan 102. Residues 117-122 and histidine 137 each bind FMN; that span reads STGTGG.

This sequence belongs to the WrbA family. FMN serves as cofactor.

It carries out the reaction a quinone + NADH + H(+) = a quinol + NAD(+). The enzyme catalyses a quinone + NADPH + H(+) = a quinol + NADP(+). The protein is NAD(P)H dehydrogenase (quinone) of Parvibaculum lavamentivorans (strain DS-1 / DSM 13023 / NCIMB 13966).